A 1384-amino-acid polypeptide reads, in one-letter code: ATP-dependent RNA helicase TDRD9 (1384 aa).

Positions 35-60 are disordered; sequence EAPREEVQRSEEVPSEAPTAQAQDPV. Residues 36 to 46 show a composition bias toward basic and acidic residues; it reads APREEVQRSEE. Residues 144–310 enclose the Helicase ATP-binding domain; the sequence is ISLIESNSVV…FAVPVQNKMN (167 aa). Residue 157–164 coordinates ATP; it reads GATGSGKS. The short motif at 256 to 259 is the DEAH box element; that stretch reads DEVH. Positions 379–546 constitute a Helicase C-terminal domain; it reads SGAQFVSERS…VLKVKLLDMG (168 aa). The Tudor domain occupies 946 to 1006; that stretch reads HPHPDLVCLA…REIPCQLLEL (61 aa).

This sequence belongs to the DEAD box helicase family. DEAH subfamily. In terms of assembly, interacts with piRNA-associated proteins PIWIL1 and PIWIL4.

The protein localises to the cytoplasm. It localises to the nucleus. It catalyses the reaction ATP + H2O = ADP + phosphate + H(+). Functionally, ATP-binding RNA helicase which plays a central role during spermatogenesis by repressing transposable elements and preventing their mobilization, which is essential for the germline integrity. Acts via the piRNA metabolic process, which mediates the repression of transposable elements during meiosis by forming complexes composed of piRNAs and Piwi proteins and governs the methylation and subsequent repression of transposons. Acts downstream of piRNA biogenesis: exclusively required for transposon silencing in the nucleus, suggesting that it acts as a nuclear effector in the nucleus together with PIWIL4. This chain is ATP-dependent RNA helicase TDRD9, found in Rattus norvegicus (Rat).